Here is a 185-residue protein sequence, read N- to C-terminus: Elongation factor P (185 aa).

Belongs to the elongation factor P family.

Its subcellular location is the cytoplasm. It participates in protein biosynthesis; polypeptide chain elongation. Its function is as follows. Involved in peptide bond synthesis. Stimulates efficient translation and peptide-bond synthesis on native or reconstituted 70S ribosomes in vitro. Probably functions indirectly by altering the affinity of the ribosome for aminoacyl-tRNA, thus increasing their reactivity as acceptors for peptidyl transferase. The chain is Elongation factor P from Caldicellulosiruptor saccharolyticus (strain ATCC 43494 / DSM 8903 / Tp8T 6331).